The sequence spans 231 residues: MTDNDDRIKLEASWKEALREEFDKPYMKQLGEFLRQEKAAGKVIFPPGPLIFNALNTTPLENVKVVIIGQDPYHGPGQAHGLCFSVQPGVPTPPSLQNIYKELNRDLNIPIPNNGYLQRWAEQGVLLLNTSLTVEQAKAGSHANAGWQPFTDRVIEVVNERCERLVFLLWGSHAQSKQKLIDPQRHLILKSAHPSPLSAYRGFLGNGHFSRTNKFLEQNGKTPIDWSLPDL.

D71 serves as the catalytic Proton acceptor.

Belongs to the uracil-DNA glycosylase (UDG) superfamily. UNG family.

The protein localises to the cytoplasm. The catalysed reaction is Hydrolyzes single-stranded DNA or mismatched double-stranded DNA and polynucleotides, releasing free uracil.. In terms of biological role, excises uracil residues from the DNA which can arise as a result of misincorporation of dUMP residues by DNA polymerase or due to deamination of cytosine. The protein is Uracil-DNA glycosylase of Pseudomonas aeruginosa (strain ATCC 15692 / DSM 22644 / CIP 104116 / JCM 14847 / LMG 12228 / 1C / PRS 101 / PAO1).